The following is a 725-amino-acid chain: Sesterterpene synthase btcA (725 aa).

Residues 1–333 form a terpene cyclase region; sequence MANPPVTEWK…CANCPRHHAW (333 aa). Mg(2+) is bound at residue aspartate 100. Substrate is bound by residues aspartate 100, asparagine 236, 240–244, and 329–330; these read SWGRE and RH. Residues 100–104 carry the DDXXD 1 motif; that stretch reads DDATE. The NSE/DTE motif lies at 236 to 244; sequence NDYWSWGRE. A prenyltransferase region spans residues 334-722; it reads KEQDQAVHAV…MLYVLLQTLS (389 aa). Residues 352 to 426 are disordered; sequence VEAQSPSSAT…PSSLHLLKSP (75 aa). Over residues 355-364 the composition is skewed to polar residues; sequence QSPSSATHTA. Over residues 375–419 the composition is skewed to low complexity; that stretch reads APSPISSPSSSSSAKPSSSSAADSSSCTSTSQHSPSETDSTPPSS. Isopentenyl diphosphate-binding residues include lysine 442, arginine 445, and histidine 474. 2 residues coordinate Mg(2+): aspartate 481 and aspartate 485. Positions 481 to 485 match the DDXXD 2 motif; that stretch reads DDIQD. A dimethylallyl diphosphate-binding site is contributed by arginine 490. An isopentenyl diphosphate-binding site is contributed by arginine 491. Residues lysine 568, threonine 569, glutamine 604, asparagine 611, lysine 621, and lysine 631 each contribute to the dimethylallyl diphosphate site.

It in the N-terminal section; belongs to the terpene synthase family. This sequence in the C-terminal section; belongs to the FPP/GGPP synthase family. In terms of assembly, hexamer. Requires Mg(2+) as cofactor.

It catalyses the reaction isopentenyl diphosphate + (2E,6E)-farnesyl diphosphate = (2E,6E,10E)-geranylgeranyl diphosphate + diphosphate. It carries out the reaction isopentenyl diphosphate + (2E,6E,10E)-geranylgeranyl diphosphate = (2E,6E,10E,14E)-geranylfarnesyl diphosphate + diphosphate. Its pathway is secondary metabolite biosynthesis; terpenoid biosynthesis. Functionally, bifunctional terpene synthase; part of the gene cluster that mediates the biosynthesis of betaestacins. The bifunctional terpene synthase btcA converts isopentenyl diphosphate (IPP) and dimethylallyl diphosphate (DMAPP) into the sesterterpene betaestacin I. The C-terminal prenyltransferase (PT) domain of btcA catalyzes formation of GFPP, whereas the N-terminal terpene cyclase (TC) domain catalyzes the cyclization of GFPP into betaestacin I. The cytochrome P450 monooxygenase btcB is then responsible for the six-step oxidation of betaestacin I to yield betaestacin II. The roles of the cytochrome P450 monooxygenase btcC and the alpha-ketoglutarate-dependent dioxygenase btcD have not been identified yet. The chain is Sesterterpene synthase btcA from Neocamarosporium betae (Beet black rot fungus).